Consider the following 442-residue polypeptide: Citrate synthase (442 aa).

Active-site residues include histidine 274, histidine 320, and aspartate 375.

Belongs to the citrate synthase family.

It catalyses the reaction oxaloacetate + acetyl-CoA + H2O = citrate + CoA + H(+). It functions in the pathway carbohydrate metabolism; tricarboxylic acid cycle; isocitrate from oxaloacetate: step 1/2. Its function is as follows. Catalyzes both citrate generation and citrate cleavage. Part of a reversible tricarboxylic acid (TCA) cycle that can fix carbon dioxide autotrophically and may represent an ancestral mode of the conventional reductive TCA (rTCA) cycle. The direction is controlled by the available carbon source(s). The chain is Citrate synthase from Thermosulfidibacter takaii (strain DSM 17441 / JCM 13301 / NBRC 103674 / ABI70S6).